We begin with the raw amino-acid sequence, 328 residues long: Aspartate carbamoyltransferase catalytic subunit (328 aa).

Carbamoyl phosphate-binding residues include Arg-64 and Thr-65. Lys-92 contributes to the L-aspartate binding site. Residues Arg-114, His-144, and Gln-147 each contribute to the carbamoyl phosphate site. Positions 177 and 232 each coordinate L-aspartate. Residues Gly-273 and Pro-274 each contribute to the carbamoyl phosphate site.

It belongs to the aspartate/ornithine carbamoyltransferase superfamily. ATCase family. In terms of assembly, heterododecamer (2C3:3R2) of six catalytic PyrB chains organized as two trimers (C3), and six regulatory PyrI chains organized as three dimers (R2).

The catalysed reaction is carbamoyl phosphate + L-aspartate = N-carbamoyl-L-aspartate + phosphate + H(+). The protein operates within pyrimidine metabolism; UMP biosynthesis via de novo pathway; (S)-dihydroorotate from bicarbonate: step 2/3. Catalyzes the condensation of carbamoyl phosphate and aspartate to form carbamoyl aspartate and inorganic phosphate, the committed step in the de novo pyrimidine nucleotide biosynthesis pathway. The protein is Aspartate carbamoyltransferase catalytic subunit of Halorhodospira halophila (strain DSM 244 / SL1) (Ectothiorhodospira halophila (strain DSM 244 / SL1)).